Consider the following 282-residue polypeptide: Nudix hydrolase 7 (282 aa).

The region spanning Ser-101–Asn-233 is the Nudix hydrolase domain. Positions Gly-139–Gly-160 match the Nudix box motif. Mg(2+)-binding residues include Glu-154 and Glu-158.

The protein belongs to the Nudix hydrolase family. In terms of assembly, homodimer. Interacts with RACK1A, GG1 and GG2. The cofactor is Mg(2+). Expressed in stems, leaves, roots, flowers and siliques.

The protein localises to the nucleus. The protein resides in the cytoplasm. Its subcellular location is the cell membrane. It catalyses the reaction ADP-D-ribose + H2O = D-ribose 5-phosphate + AMP + 2 H(+). The catalysed reaction is NAD(+) + H2O = beta-nicotinamide D-ribonucleotide + AMP + 2 H(+). The enzyme catalyses NADH + H2O = reduced beta-nicotinamide D-ribonucleotide + AMP + 2 H(+). Its activity is regulated as follows. Not inhibited by fluoride. Its function is as follows. Mediates the hydrolysis of some nucleoside diphosphate derivatives. Can use both NADH and ADP-ribose as substrates, but not 8-oxo-dGTP, cyclic ADP-ribose, GDP-mannose, UDP-glucose, ATP, or GTP. Exerts negative control of EDS1 signaling. The sequence is that of Nudix hydrolase 7 (NUDT7) from Arabidopsis thaliana (Mouse-ear cress).